The primary structure comprises 495 residues: UDP-N-acetylmuramoyl-L-alanyl-D-glutamate--2,6-diaminopimelate ligase (495 aa).

UDP-N-acetyl-alpha-D-muramoyl-L-alanyl-D-glutamate is bound by residues L27, S29, and 44 to 46 (HQA). 116 to 122 (GTNGKTT) provides a ligand contact to ATP. UDP-N-acetyl-alpha-D-muramoyl-L-alanyl-D-glutamate-binding positions include N157, 158–159 (TT), S185, Q191, and R193. K225 carries the post-translational modification N6-carboxylysine. Meso-2,6-diaminopimelate contacts are provided by residues R390, 414–417 (DNPR), G465, and E469. The short motif at 414–417 (DNPR) is the Meso-diaminopimelate recognition motif element.

This sequence belongs to the MurCDEF family. MurE subfamily. The cofactor is Mg(2+). In terms of processing, carboxylation is probably crucial for Mg(2+) binding and, consequently, for the gamma-phosphate positioning of ATP.

The protein resides in the cytoplasm. The enzyme catalyses UDP-N-acetyl-alpha-D-muramoyl-L-alanyl-D-glutamate + meso-2,6-diaminopimelate + ATP = UDP-N-acetyl-alpha-D-muramoyl-L-alanyl-gamma-D-glutamyl-meso-2,6-diaminopimelate + ADP + phosphate + H(+). It participates in cell wall biogenesis; peptidoglycan biosynthesis. Its function is as follows. Catalyzes the addition of meso-diaminopimelic acid to the nucleotide precursor UDP-N-acetylmuramoyl-L-alanyl-D-glutamate (UMAG) in the biosynthesis of bacterial cell-wall peptidoglycan. The polypeptide is UDP-N-acetylmuramoyl-L-alanyl-D-glutamate--2,6-diaminopimelate ligase (Escherichia coli O157:H7).